The primary structure comprises 194 residues: Peptidyl-tRNA hydrolase (194 aa).

Y17 is a tRNA binding site. Catalysis depends on H22, which acts as the Proton acceptor. TRNA-binding residues include F68, N70, and N116.

The protein belongs to the PTH family. As to quaternary structure, monomer.

Its subcellular location is the cytoplasm. It catalyses the reaction an N-acyl-L-alpha-aminoacyl-tRNA + H2O = an N-acyl-L-amino acid + a tRNA + H(+). Functionally, hydrolyzes ribosome-free peptidyl-tRNAs (with 1 or more amino acids incorporated), which drop off the ribosome during protein synthesis, or as a result of ribosome stalling. In terms of biological role, catalyzes the release of premature peptidyl moieties from peptidyl-tRNA molecules trapped in stalled 50S ribosomal subunits, and thus maintains levels of free tRNAs and 50S ribosomes. This is Peptidyl-tRNA hydrolase from Shewanella woodyi (strain ATCC 51908 / MS32).